The sequence spans 218 residues: Ribose-5-phosphate isomerase A (218 aa).

Substrate contacts are provided by residues 28–31 (TGST), 81–84 (DGAD), and 94–97 (KGGG). Glutamate 103 serves as the catalytic Proton acceptor. Lysine 121 lines the substrate pocket.

This sequence belongs to the ribose 5-phosphate isomerase family. As to quaternary structure, homodimer.

It carries out the reaction aldehydo-D-ribose 5-phosphate = D-ribulose 5-phosphate. The protein operates within carbohydrate degradation; pentose phosphate pathway; D-ribose 5-phosphate from D-ribulose 5-phosphate (non-oxidative stage): step 1/1. Catalyzes the reversible conversion of ribose-5-phosphate to ribulose 5-phosphate. This Aliivibrio salmonicida (strain LFI1238) (Vibrio salmonicida (strain LFI1238)) protein is Ribose-5-phosphate isomerase A.